The following is a 36-amino-acid chain: Pancreatic polypeptide (36 aa).

Phenylalanine amide is present on Phe-36.

Belongs to the NPY family.

Its subcellular location is the secreted. Its function is as follows. Hormone secreted by pancreatic cells that acts as a regulator of pancreatic and gastrointestinal functions. The polypeptide is Pancreatic polypeptide (ppy) (Alligator mississippiensis (American alligator)).